The primary structure comprises 831 residues: Translation initiation factor IF-2 (831 aa).

The 171-residue stretch at 329–499 (TRAPVVTVMG…LLISEMQDLK (171 aa)) folds into the tr-type G domain. The interval 338–345 (GHVDHGKT) is G1. 338 to 345 (GHVDHGKT) provides a ligand contact to GTP. Residues 363–367 (GITQH) are G2. A G3 region spans residues 385–388 (DTPG). Residues 385-389 (DTPGH) and 439-442 (NKID) contribute to the GTP site. Residues 439-442 (NKID) form a G4 region. Residues 475–477 (SAL) form a G5 region.

The protein belongs to the TRAFAC class translation factor GTPase superfamily. Classic translation factor GTPase family. IF-2 subfamily.

The protein resides in the cytoplasm. Its function is as follows. One of the essential components for the initiation of protein synthesis. Protects formylmethionyl-tRNA from spontaneous hydrolysis and promotes its binding to the 30S ribosomal subunits. Also involved in the hydrolysis of GTP during the formation of the 70S ribosomal complex. This chain is Translation initiation factor IF-2 (infB), found in Rickettsia prowazekii (strain Madrid E).